A 336-amino-acid chain; its full sequence is Biotin synthase (336 aa).

Residues 48-277 (VFGDEVEFCS…QAELRLCGGR (230 aa)) enclose the Radical SAM core domain. The [4Fe-4S] cluster site is built by C66, C70, and C73. [2Fe-2S] cluster contacts are provided by C110, C142, C202, and R272.

This sequence belongs to the radical SAM superfamily. Biotin synthase family. Homodimer. The cofactor is [4Fe-4S] cluster. Requires [2Fe-2S] cluster as cofactor.

It catalyses the reaction (4R,5S)-dethiobiotin + (sulfur carrier)-SH + 2 reduced [2Fe-2S]-[ferredoxin] + 2 S-adenosyl-L-methionine = (sulfur carrier)-H + biotin + 2 5'-deoxyadenosine + 2 L-methionine + 2 oxidized [2Fe-2S]-[ferredoxin]. It functions in the pathway cofactor biosynthesis; biotin biosynthesis; biotin from 7,8-diaminononanoate: step 2/2. Functionally, catalyzes the conversion of dethiobiotin (DTB) to biotin by the insertion of a sulfur atom into dethiobiotin via a radical-based mechanism. The sequence is that of Biotin synthase from Persephonella marina (strain DSM 14350 / EX-H1).